A 376-amino-acid polypeptide reads, in one-letter code: MASYPCHQHASAFDQAARSRGHSNRRTALRPRRQQEATEVRLEQKMPTLLRVYIDGPHGMGKTTTTQLLVALGSRDDIVYVPEPMTYWQVLGASETIANIYTTQHRLDQGEISAGDAAVVMTSAQITMGMPYAVTDAVLAPHIGGEAGSSHAPPPALTLIFDRHPIAALLCYPAARYLMGSMTPQAVLAFVALIPPTLPGTNIVLGALPEDRHIDRLAKRQRPGERLDLAMLAAIRRVYGLLANTVRYLQGGGSWREDWGQLSGTAVPPQGAEPQSNAGPRPHIGDTLFTLFRAPELLAPNGDLYNVFAWALDVLAKRLRPMHVFILDYDQSPAGCRDALLQLTSGMVQTHVTTPGSIPTICDLARTFAREMGEAN.

Residues 1–39 form a disordered region; it reads MASYPCHQHASAFDQAARSRGHSNRRTALRPRRQQEATE. The span at 19–32 shows a compositional bias: basic residues; that stretch reads SRGHSNRRTALRPR. 56–63 lines the ATP pocket; it reads GPHGMGKT. Glutamate 83 serves as the catalytic Proton acceptor. The substrate site is built by tyrosine 101 and glutamine 125. Residue arginine 216 participates in ATP binding. A substrate-binding site is contributed by arginine 222. Residues 260-280 are disordered; that stretch reads GQLSGTAVPPQGAEPQSNAGP.

It belongs to the herpesviridae thymidine kinase family. In terms of assembly, homodimer.

It catalyses the reaction thymidine + ATP = dTMP + ADP + H(+). Its function is as follows. Catalyzes the transfer of the gamma-phospho group of ATP to thymidine to generate dTMP in the salvage pathway of pyrimidine synthesis. The dTMP serves as a substrate for DNA polymerase during viral DNA replication. Allows the virus to be reactivated and to grow in non-proliferative cells lacking a high concentration of phosphorylated nucleic acid precursors. In Homo sapiens (Human), this protein is Thymidine kinase.